Reading from the N-terminus, the 485-residue chain is Glutamate--tRNA ligase (485 aa).

The short motif at 12 to 22 (PSPTGYMHIGN) is the 'HIGH' region element. The 'KMSKS' region signature appears at 253–257 (KLSKR). Residue Lys-256 participates in ATP binding.

This sequence belongs to the class-I aminoacyl-tRNA synthetase family. Glutamate--tRNA ligase type 1 subfamily. In terms of assembly, monomer.

The protein localises to the cytoplasm. The catalysed reaction is tRNA(Glu) + L-glutamate + ATP = L-glutamyl-tRNA(Glu) + AMP + diphosphate. In terms of biological role, catalyzes the attachment of glutamate to tRNA(Glu) in a two-step reaction: glutamate is first activated by ATP to form Glu-AMP and then transferred to the acceptor end of tRNA(Glu). This Clostridium acetobutylicum (strain ATCC 824 / DSM 792 / JCM 1419 / IAM 19013 / LMG 5710 / NBRC 13948 / NRRL B-527 / VKM B-1787 / 2291 / W) protein is Glutamate--tRNA ligase.